A 615-amino-acid chain; its full sequence is Dolichyl-diphosphooligosaccharide--protein glycosyltransferase subunit 1A (615 aa).

A signal peptide spans 1 to 28; it reads MATPPPLRRVAALLLLLVAAASTPTARA. Residues 29–437 lie on the Lumenal side of the membrane; it reads DLVVTRADRK…RFNNISLLRE (409 aa). Position 187 is an N6-acetyllysine (Lys-187). Residues Asn-300, Asn-353, and Asn-431 are each glycosylated (N-linked (GlcNAc...) asparagine). The chain crosses the membrane as a helical span at residues 438 to 455; sequence PMMLITGFFLLFMACIVY. The Cytoplasmic segment spans residues 456–615; it reads MRTDMSISKN…ESLLEYISEI (160 aa).

This sequence belongs to the OST1 family. As to quaternary structure, component of the oligosaccharyltransferase (OST) complex.

The protein resides in the endoplasmic reticulum membrane. Its pathway is protein modification; protein glycosylation. In terms of biological role, subunit of the oligosaccharyl transferase (OST) complex that catalyzes the initial transfer of a defined glycan (Glc(3)Man(9)GlcNAc(2) in eukaryotes) from the lipid carrier dolichol-pyrophosphate to an asparagine residue within an Asn-X-Ser/Thr consensus motif in nascent polypeptide chains, the first step in protein N-glycosylation. N-glycosylation occurs cotranslationally and the complex associates with the Sec61 complex at the channel-forming translocon complex that mediates protein translocation across the endoplasmic reticulum (ER). All subunits are required for a maximal enzyme activity. The protein is Dolichyl-diphosphooligosaccharide--protein glycosyltransferase subunit 1A (OST1A) of Oryza sativa subsp. japonica (Rice).